A 106-amino-acid chain; its full sequence is Nucleoid-associated protein DIP0260 (106 aa).

Belongs to the YbaB/EbfC family. Homodimer.

It is found in the cytoplasm. Its subcellular location is the nucleoid. Its function is as follows. Binds to DNA and alters its conformation. May be involved in regulation of gene expression, nucleoid organization and DNA protection. This Corynebacterium diphtheriae (strain ATCC 700971 / NCTC 13129 / Biotype gravis) protein is Nucleoid-associated protein DIP0260.